The sequence spans 719 residues: Protein psiJ (719 aa).

Positions 1-21 (MVSNLLKGLILFSLFISFLNG) are cleaved as a signal peptide. The Extracellular portion of the chain corresponds to 22-653 (DDKIFPVTIR…RCQSVAVKAG (632 aa)). 10 N-linked (GlcNAc...) asparagine glycosylation sites follow: Asn46, Asn59, Asn86, Asn113, Asn301, Asn372, Asn435, Asn457, Asn562, and Asn628. The PA14 domain occupies 112–260 (QNQTDPRVFY…KDYCGVCEGT (149 aa)). Residues 654-674 (VIGGAAIAGVVVGGAVALGLA) form a helical membrane-spanning segment. The Cytoplasmic segment spans residues 675–719 (LFGAKAGYNHWMSLKNNQMATSSVNPLYEPSPHQGTNPLWEAPPT).

The protein belongs to the prespore-cell-inducing factor family.

It is found in the membrane. The sequence is that of Protein psiJ (psiJ) from Dictyostelium discoideum (Social amoeba).